Reading from the N-terminus, the 236-residue chain is Small ribosomal subunit protein eS6 (236 aa).

Belongs to the eukaryotic ribosomal protein eS6 family. In terms of assembly, component of the small ribosomal subunit. Part of the small subunit (SSU) processome, composed of more than 70 proteins and the RNA chaperone small nucleolar RNA (snoRNA) U3. Ribosomal protein S6 is the major substrate of protein kinases in eukaryote ribosomes.

The protein localises to the cytoplasm. It is found in the nucleus. The protein resides in the nucleolus. In terms of biological role, component of the 40S small ribosomal subunit. Plays an important role in controlling cell growth and proliferation through the selective translation of particular classes of mRNA. Part of the small subunit (SSU) processome, first precursor of the small eukaryotic ribosomal subunit. During the assembly of the SSU processome in the nucleolus, many ribosome biogenesis factors, an RNA chaperone and ribosomal proteins associate with the nascent pre-rRNA and work in concert to generate RNA folding, modifications, rearrangements and cleavage as well as targeted degradation of pre-ribosomal RNA by the RNA exosome. The polypeptide is Small ribosomal subunit protein eS6 (rps6) (Dictyostelium discoideum (Social amoeba)).